Consider the following 223-residue polypeptide: MEQNFARMIDHTLLKAEATKEQIEKLCAEAKQFNFASVCVNPTWVKHSSELLQGSDVLVCTVIGFPLGANTPAVKAFEVKDAIANGANEVDMVINIGALKDKNYDLVQADIAAVVQAAKGSALVKVIIESCLLTDEEKVKACELAVAAGADYVKTSTGFSTGGATAADIALMRKTVGPELGVKASGGVRSLEDMKSMVEAGATRIGASSGVAIMNGLIADSNY.

Aspartate 91 serves as the catalytic Proton donor/acceptor. Lysine 154 acts as the Schiff-base intermediate with acetaldehyde in catalysis. Lysine 183 serves as the catalytic Proton donor/acceptor.

It belongs to the DeoC/FbaB aldolase family. DeoC type 1 subfamily.

It is found in the cytoplasm. The catalysed reaction is 2-deoxy-D-ribose 5-phosphate = D-glyceraldehyde 3-phosphate + acetaldehyde. It participates in carbohydrate degradation; 2-deoxy-D-ribose 1-phosphate degradation; D-glyceraldehyde 3-phosphate and acetaldehyde from 2-deoxy-alpha-D-ribose 1-phosphate: step 2/2. In terms of biological role, catalyzes a reversible aldol reaction between acetaldehyde and D-glyceraldehyde 3-phosphate to generate 2-deoxy-D-ribose 5-phosphate. The polypeptide is Deoxyribose-phosphate aldolase (Lysinibacillus sphaericus (strain C3-41)).